The chain runs to 186 residues: uncharacterized protein (186 aa).

This is an uncharacterized protein from Methanocaldococcus jannaschii (strain ATCC 43067 / DSM 2661 / JAL-1 / JCM 10045 / NBRC 100440) (Methanococcus jannaschii).